The chain runs to 494 residues: UPF0371 protein str1377 (494 aa).

This sequence belongs to the UPF0371 family.

The polypeptide is UPF0371 protein str1377 (Streptococcus thermophilus (strain CNRZ 1066)).